The sequence spans 589 residues: Protein drl-1 (589 aa).

Positions 1 to 51 (MHSEEKYLHIPNNTKYPEIIVEEEEEDPSEEERSELSETDDVATPLRPSDT) are disordered. A compositionally biased stretch (acidic residues) spans 20–41 (IVEEEEEDPSEEERSELSETDD). In terms of domain architecture, Protein kinase spans 97–373 (WRINEDVMKD…QNLLESHGSK (277 aa)). Helical transmembrane passes span 429 to 449 (GFIP…VLLV), 456 to 476 (LCAA…IFLI), and 491 to 511 (GFVV…TTLC).

It belongs to the protein kinase superfamily. STE Ser/Thr protein kinase family. As to expression, expressed in vulval and body wall muscles, hypodermis, seam cells and tissues next to pharynx and anus.

Its subcellular location is the membrane. Functionally, negatively regulates lifespan and health span probably by participating in nutrient sensing. This Caenorhabditis elegans protein is Protein drl-1.